Reading from the N-terminus, the 469-residue chain is MFQNADEAKKLIADEDVKFIDVRFCDLPGVMQHFTIPASAFDPAEELAFDGSSIRGFQAIHESDMAVRADLSTARVDPFRRDKTVNINFFIHDPITGEQYSRDPRNVAKKAEAYLASTGIGDTGYFGPEAEFYVFDSVRLANSATESFYHIDSEAGAWNTGALENNRGYKVRYKGGYFPVPPVDHFADLRAQISLELDRAGLQVERHDHEVGTAGQAEINYKFNTLLAAADDLQLFKYIVKNVAWQNGKTATFMPKPIFGDNGSGMHVHQSLWTGGQALFYDEAGYAGLSDTARYYMGGILKHAPSLLAFTNPTVNSYHRLVPGFEAPVNLVYSQRNRSAAMRIPITGSNPKAKRVEFRAPDSSGNPYLAFSALLLAGLDGIKNKIEPAEPIDKDLYELAPEEHAGVPQVPTSLPAVLDRLEADHEFLLAGDVFTPDLIETWIDYKRTNEIAPLQLRPHPYEYEQYYDV.

A GS beta-grasp domain is found at 15-96 (EDVKFIDVRF…INFFIHDPIT (82 aa)). The 366-residue stretch at 104–469 (PRNVAKKAEA…PYEYEQYYDV (366 aa)) folds into the GS catalytic domain. The Mg(2+) site is built by glutamate 129 and glutamate 131. Glutamate 205 contacts ATP. Mg(2+) contacts are provided by glutamate 210 and glutamate 218. Residue 221-223 (YKF) participates in ATP binding. Residues 262 to 263 (NG) and glycine 263 each bind L-glutamate. Histidine 267 contributes to the Mg(2+) binding site. ATP-binding positions include 269 to 271 (HQS) and serine 271. L-glutamate contacts are provided by arginine 320, glutamate 326, and arginine 338. 3 residues coordinate ATP: arginine 338, arginine 343, and lysine 352. Mg(2+) is bound at residue glutamate 357. Arginine 359 serves as a coordination point for L-glutamate. The residue at position 397 (tyrosine 397) is an O-AMP-tyrosine.

It belongs to the glutamine synthetase family. Oligomer of 12 subunits arranged in the form of two hexagons. The cofactor is Mg(2+).

It is found in the cytoplasm. The enzyme catalyses L-glutamate + NH4(+) + ATP = L-glutamine + ADP + phosphate + H(+). The activity of this enzyme could be controlled by adenylation under conditions of abundant glutamine. In terms of biological role, catalyzes the ATP-dependent biosynthesis of glutamine from glutamate and ammonia. The chain is Glutamine synthetase from Streptomyces viridochromogenes.